A 53-amino-acid chain; its full sequence is ComX pheromone (53 aa).

The propeptide occupies Met1–Tyr46. Trp51 carries the 3'-geranyl-2',N2-cyclotryptophan lipid modification.

In terms of assembly, interacts directly with the sensor histidine kinase ComP and stimulates its activity. Trp-51 is modified by geranylation, which is essential for activity. Modified by the tryptophan prenyltransferase ComQ before export to the extracellular environment. The type of isoprenyl derivative differs among the different pherotypes and depends on ComX primary sequence.

Its subcellular location is the secreted. Part of a major quorum-sensing system that regulates the development of genetic competence. Acts through the activation of the two-component regulatory system ComP/ComA composed of a sensor histidine kinase, ComP, and a response regulator, ComA. The chain is ComX pheromone from Bacillus mojavensis.